A 373-amino-acid polypeptide reads, in one-letter code: 3-isopropylmalate dehydrogenase gloI (373 aa).

The substrate site is built by Ser-92, Arg-98, and Arg-108. Residues Asp-228, Asp-253, and Asp-257 each coordinate Mg(2+). Residues 294-300 (HGSAPDI) and Asn-307 each bind NADP(+).

Belongs to the isocitrate and isopropylmalate dehydrogenases family. As to quaternary structure, homodimer. It depends on Mg(2+) as a cofactor. Mn(2+) is required as a cofactor.

It catalyses the reaction (2R,3S)-3-isopropylmalate + NAD(+) = 4-methyl-2-oxopentanoate + CO2 + NADH. It participates in mycotoxin biosynthesis. 3-isopropylmalate dehydrogenase; part of the gene cluster that mediates the biosynthesis of pneumocandins, lipohexapeptides of the echinocandin family that prevent fungal cell wall formation by non-competitive inhibition of beta-1,3-glucan synthase. The 10,12-dimethylmyristoyl side chain is synthesized by the reducing polyketide synthase gloL/GLPKS4. The thioesterase gloN/GLHYD exclusively interacts with gloL/GLPKS4 to maintain turnover of the polyketide side chain. The 10R,12S-dimethylmyristic acid is then transferred to the first thiolation domain of the nonribosomal peptide synthetase gloA/GLNRPS4 by the acyl-AMP ligase gloD/GLligase, followed by its acylation to L-ornithine to trigger elongation of the cyclic hexapeptide. L-ornithine, 4R-hydroxyl-L-proline (generated from L-proline by the dioxygenase gloF/GLOXY2), 3S-hydroxyl-L-homotyrosine (generated by gloG/GLHtyB, gloH/GLHtyA, gloI/GLHtyC, gloJ/GLHtyD and hydroxylated at C-3 by the dioxygenase gloM/GLOXY1), 3R-hydroxyl-L-glutamine (generated from L-glutamine probably by the dioxygenase gloE/GLOXY3) and 3S-hydroxyl-L-proline (generated from L-proline by the dioxygenase gloF/GLOXY2 to yield pneumocandin B0), or 3S-hydroxyl-4S-methyl-L-proline (generated from L-leucine by the dioxygenase gloC/GLOXY4 to yield pneumocandin A0) are sequentially added to the growing chain. The last C domain of gloA/GLNRPS4 is proposed to be responsible for cyclization by condensation to form the peptide bond between L-ornithine and 3S-hydroxyl-4S-methyl-L-proline (for pneumocandin A0) or 3S-hydroxyl-L-proline (for pneumocandin B0). Finally, the subsequent C-4 hydroxylation of 3S-hydroxyl-L-homotyrosine and L-ornithine dihydroxylation at C-4 and C-5 are performed by the cytochrome P450 monooxygenases gloP/GLP450-1 and gloO/GLP450-2, respectively. The chain is 3-isopropylmalate dehydrogenase gloI from Glarea lozoyensis (strain ATCC 20868 / MF5171).